Reading from the N-terminus, the 975-residue chain is NLR family member X1 (975 aa).

The transit peptide at 1–86 directs the protein to the mitochondrion; the sequence is MRWGHHLPRA…EAIQRHRRNL (86 aa). The required for interaction with MAVS stretch occupies residues 75 to 556; that stretch reads ATEAIQRHRR…RALPLLFNLI (482 aa). Positions 160–483 constitute an NACHT domain; sequence QTVVLYGTVG…LRFFLAPCVE (324 aa). Residue 166-173 coordinates ATP; it reads GTVGTGKS. The required for the repression of MAVS-induced interferon signaling stretch occupies residues 556-974; that stretch reads IKVVPRVFGR…ALLEQLGSSG (419 aa). Positions 667-694 constitute an LRRNT domain; sequence RQVLPPSELLDHLFFHYEFQNQRFSAEV. LRR repeat units lie at residues 695–718, 724–747, 749–777, 778–801, 811–834, 835–857, 858–877, and 878–899; these read LSSLRQLNLAGVRMTPVKCTVVAA, RHALDEVNLASCQLDPAGLRTLLP, FLRARKLGLQLNSLGPEACKDLRDLLLHD, QCQITTLRLSNNPLTAAGVAVLME, HLSLLHTGLGDEGLELLAAQLDRN, RQLQELNVAYNGAGDTAALALAR, AAREHPSLELLHLYFNELSS, and EGRQVLRDLGGAAEGGARVVVS. One can recognise an LRRCT domain in the interval 906-970; it reads VSEYWSVILS…GEVRALLEQL (65 aa).

The protein belongs to the NLRP family. As to quaternary structure, homohexamer. Interacts with MAVS. Interacts with TUFM. (Microbial infection) Interacts with influenza A virus protein PB1-F2. Ubiquitously expressed. Strongest expression in mammary gland, heart and muscle. Detected in HeLa, HEK293T, THP-1, HL-60, Raji and Jurkat cell lines (at protein level).

The protein resides in the mitochondrion outer membrane. Functionally, participates in antiviral signaling. Acts as a negative regulator of MAVS-mediated antiviral responses, through the inhibition of the virus-induced RLH (RIG-like helicase)-MAVS interaction. Instead, promotes autophagy by interacting with TUFM and subsequently recruiting the autophagy-related proteins ATG5 and ATG12. Also regulates MAVS-dependent NLRP3 inflammasome activation to attenuate apoptosis. Has no inhibitory function on NF-kappa-B signaling pathway, but enhances NF-kappa-B and JUN N-terminal kinase dependent signaling through the production of reactive oxygen species. Regulates viral mediated-inflammation and energy metabolism in a sex-dependent manner. In females, prevents uncontrolled inflammation and energy metabolism and thus, may contribute to the sex differences observed in infectious and inflammatory diseases. In Homo sapiens (Human), this protein is NLR family member X1 (NLRX1).